The chain runs to 2276 residues: Protein Ycf2 (2276 aa).

Position 1621–1628 (1621–1628 (GSIGTGRS)) interacts with ATP.

This sequence belongs to the Ycf2 family.

Its subcellular location is the plastid. It localises to the chloroplast stroma. Its function is as follows. Probable ATPase of unknown function. Its presence in a non-photosynthetic plant (Epifagus virginiana) and experiments in tobacco indicate that it has an essential function which is probably not related to photosynthesis. This Guizotia abyssinica (Niger) protein is Protein Ycf2.